The sequence spans 359 residues: Cytochrome c oxidase subunit 2 (359 aa).

An N-terminal signal peptide occupies residues 1–28; sequence MEQQNKRGLKRKALLGGVLGSGGLAMAG. Cysteine 29 carries N-palmitoyl cysteine lipidation. Cysteine 29 is lipidated: S-diacylglycerol cysteine. 2 helical membrane passes run 64–84 and 107–127; these read VWVA…TAIF and VPLE…LFFF. Residues histidine 244, cysteine 285, glutamate 287, cysteine 289, histidine 293, and methionine 296 each contribute to the Cu cation site. The tract at residues 338–359 is disordered; sequence STAPFVSDRTGTRDGENFQTPA.

The protein belongs to the cytochrome c oxidase subunit 2 family. As to quaternary structure, associates with subunits I, III and IV to form cytochrome c oxidase. Requires binuclear copper center (CuA) as cofactor.

It localises to the cell membrane. It catalyses the reaction 4 Fe(II)-[cytochrome c] + O2 + 8 H(+)(in) = 4 Fe(III)-[cytochrome c] + 2 H2O + 4 H(+)(out). In terms of biological role, subunits I and II form the functional core of the enzyme complex. Electrons originating in cytochrome c are transferred via heme a and Cu(A) to the binuclear center formed by heme a3 and Cu(B). This chain is Cytochrome c oxidase subunit 2 (ctaC), found in Corynebacterium efficiens (strain DSM 44549 / YS-314 / AJ 12310 / JCM 11189 / NBRC 100395).